A 558-amino-acid chain; its full sequence is Inositol-3-phosphate synthase 1 (558 aa).

Residues Gly67, Gly68, Asn69, Asn70, Asp141, Ser177, Val178, Gln188, Arg191, Thr228, Ala229, Asn230, Thr231, Gly278, Ser279, Asp303, Ser306, Asn337, Asn338, Asp339, and Lys352 each contribute to the NAD(+) site. The residue at position 279 (Ser279) is a Phosphoserine. Ser357 is subject to Phosphoserine. NAD(+)-binding residues include Gly390, Asp391, Asp419, and Ser420. The segment at 537-558 is disordered; that stretch reads ATNGCTGDANGHLQEEPPMPTT.

Belongs to the myo-inositol 1-phosphate synthase family. It depends on NAD(+) as a cofactor. Post-translationally, phosphorylation at Ser-279 and Ser-357 may be associated with a decrease in activity. Highly expressed in testis, ovary, heart, placenta and pancreas. Weakly expressed in blood leukocyte, thymus, skeletal muscle and colon.

The protein resides in the cytoplasm. It catalyses the reaction D-glucose 6-phosphate = 1D-myo-inositol 3-phosphate. The protein operates within polyol metabolism; myo-inositol biosynthesis; myo-inositol from D-glucose 6-phosphate: step 1/2. With respect to regulation, inhibited by mood-stabilizing drugs such as valproate (VPA) and lithium. Key enzyme in myo-inositol biosynthesis pathway that catalyzes the conversion of glucose 6-phosphate to 1-myo-inositol 1-phosphate in a NAD-dependent manner. Rate-limiting enzyme in the synthesis of all inositol-containing compounds. In Homo sapiens (Human), this protein is Inositol-3-phosphate synthase 1 (ISYNA1).